We begin with the raw amino-acid sequence, 387 residues long: MATVIPGPLSLGEDFYREAIEHCRSYNARLCAERSLRLPFLDSQTGVAQNNCYIWMEKTHRGPGLAPGQIYTYPARCWRKKRRLNILEDPRLRPCEYKIDCEAPLKKEGGLPEGPVLEALLCAETGEKKIELKEEETIMDCQKQQLLEFPHDLEVEDLEDDIPRRKNRAKGKAYGIGGLRKRQDTASLEDRDKPYVCDICGKRYKNRPGLSYHYTHTHLAEEEGEENAERHALPFHRKNNHKQFYKELAWVPEAQRKHTAKKAPDGTVIPNGYCDFCLGGSKKTGCPEDLISCADCGRSGHPSCLQFTVNMTAAVRTYRWQCIECKSCSLCGTSENDDQLLFCDDCDRGYHMYCLSPPMAEPPEGSWSCHLCLRHLKEKASAYITLT.

Residues lysine 106, lysine 129, and lysine 133 each participate in a glycyl lysine isopeptide (Lys-Gly) (interchain with G-Cter in SUMO2) cross-link. The C2H2-type zinc-finger motif lies at 195–218 (YVCDICGKRYKNRPGLSYHYTHTH). 2 consecutive PHD-type zinc fingers follow at residues 271–328 (NGYC…CKSC) and 325–375 (CKSC…CLRH). Cysteine 274, cysteine 277, cysteine 293, cysteine 296, histidine 301, cysteine 304, cysteine 322, cysteine 325, cysteine 328, cysteine 331, cysteine 343, cysteine 346, histidine 351, cysteine 354, cysteine 369, and cysteine 372 together coordinate Zn(2+).

This sequence belongs to the requiem/DPF family. In terms of assembly, component of neuron-specific chromatin remodeling complex (nBAF complex) composed of at least, ARID1A/BAF250A or ARID1B/BAF250B, SMARCD1/BAF60A, SMARCD3/BAF60C, SMARCA2/BRM/BAF190B, SMARCA4/BRG1/BAF190A, SMARCB1/BAF47, SMARCC1/BAF155, SMARCE1/BAF57, SMARCC2/BAF170, DPF1/BAF45B, DPF3/BAF45C, ACTL6B/BAF53B and actin.

Its subcellular location is the cytoplasm. The protein resides in the nucleus. Its function is as follows. May have an important role in developing neurons by participating in regulation of cell survival, possibly as a neurospecific transcription factor. Belongs to the neuron-specific chromatin remodeling complex (nBAF complex). During neural development a switch from a stem/progenitor to a postmitotic chromatin remodeling mechanism occurs as neurons exit the cell cycle and become committed to their adult state. The transition from proliferating neural stem/progenitor cells to postmitotic neurons requires a switch in subunit composition of the npBAF and nBAF complexes. As neural progenitors exit mitosis and differentiate into neurons, npBAF complexes which contain ACTL6A/BAF53A and PHF10/BAF45A, are exchanged for homologous alternative ACTL6B/BAF53B and DPF1/BAF45B or DPF3/BAF45C subunits in neuron-specific complexes (nBAF). The npBAF complex is essential for the self-renewal/proliferative capacity of the multipotent neural stem cells. The nBAF complex along with CREST plays a role regulating the activity of genes essential for dendrite growth. This Homo sapiens (Human) protein is Zinc finger protein neuro-d4.